The sequence spans 489 residues: Rhamnulokinase (489 aa).

An ATP-binding site is contributed by 13 to 17 (ASSGR). A disulfide bridge connects residues Cys68 and Cys222. Residues Gly83 and 236-238 (HDT) contribute to the substrate site. Asp237 serves as the catalytic Proton acceptor. Thr259 provides a ligand contact to ATP. Residue Asn296 participates in substrate binding. Residue Gln304 participates in ATP binding. An intrachain disulfide couples Cys353 to Cys370. An ATP-binding site is contributed by Gly402. A disulfide bond links Cys413 and Cys417.

This sequence belongs to the rhamnulokinase family. As to quaternary structure, monomer. Mg(2+) serves as cofactor.

The catalysed reaction is L-rhamnulose + ATP = L-rhamnulose 1-phosphate + ADP + H(+). It participates in carbohydrate degradation; L-rhamnose degradation; glycerone phosphate from L-rhamnose: step 2/3. Its function is as follows. Involved in the catabolism of L-rhamnose (6-deoxy-L-mannose). Catalyzes the transfer of the gamma-phosphate group from ATP to the 1-hydroxyl group of L-rhamnulose to yield L-rhamnulose 1-phosphate. The chain is Rhamnulokinase from Escherichia coli O7:K1 (strain IAI39 / ExPEC).